The following is a 224-amino-acid chain: Coiled-coil domain-containing protein 43 (224 aa).

A Glycyl lysine isopeptide (Lys-Gly) (interchain with G-Cter in SUMO1) cross-link involves residue lysine 95. Coiled-coil stretches lie at residues 121-145 and 177-218; these read SEEEKQRKAALLAQYADVTDEEDEA and RKLE…KRTQ. Acidic residues predominate over residues 138–149; the sequence is VTDEEDEADEKD. Disordered stretches follow at residues 138-157 and 176-224; these read VTDEEDEADEKDDSGATTMN and ARKL…ERKR. Residue threonine 139 is modified to Phosphothreonine. Basic and acidic residues predominate over residues 176-211; sequence ARKLERDSLRDESQRKKEQDKLQRERDKLAKQERKE. Positions 212–224 are enriched in basic residues; the sequence is KEKKRTQRGERKR.

Belongs to the CCDC43 family.

In Homo sapiens (Human), this protein is Coiled-coil domain-containing protein 43 (CCDC43).